Here is a 431-residue protein sequence, read N- to C-terminus: tRNA(Ile)-lysidine synthase (431 aa).

ATP is bound at residue 25–30 (SGGPDS).

Belongs to the tRNA(Ile)-lysidine synthase family.

Its subcellular location is the cytoplasm. The enzyme catalyses cytidine(34) in tRNA(Ile2) + L-lysine + ATP = lysidine(34) in tRNA(Ile2) + AMP + diphosphate + H(+). Ligates lysine onto the cytidine present at position 34 of the AUA codon-specific tRNA(Ile) that contains the anticodon CAU, in an ATP-dependent manner. Cytidine is converted to lysidine, thus changing the amino acid specificity of the tRNA from methionine to isoleucine. This Lactobacillus johnsonii (strain CNCM I-12250 / La1 / NCC 533) protein is tRNA(Ile)-lysidine synthase.